Consider the following 561-residue polypeptide: Putative transport protein YbjL (561 aa).

5 helical membrane passes run 8–28 (LLNG…LCLG), 32–52 (LGSV…LLGQ), 66–86 (FMLF…SIFF), 94–114 (MLAL…GKLF), and 158–178 (NLSL…IVGA). RCK C-terminal domains are found at residues 200-288 (RGLD…SFRN) and 292-373 (VFDR…RIGF). 5 consecutive transmembrane segments (helical) span residues 383–403 (LLAF…TFQF), 406–426 (FSFG…LGFL), 447–467 (FGLM…INNG), 475–495 (MLIA…LFGA), and 540–560 (AIAN…WPGL).

Belongs to the AAE transporter (TC 2.A.81) family. YbjL subfamily.

It localises to the cell membrane. This chain is Putative transport protein YbjL, found in Salmonella paratyphi C (strain RKS4594).